The sequence spans 255 residues: Flagellar brake protein YcgR (255 aa).

Residues 130–245 (QRREHFRVPL…MAAHLQRFVM (116 aa)) form the PilZ domain.

It belongs to the YcgR family. Monomer. Interacts with the flagellar basal bodies.

The protein localises to the bacterial flagellum basal body. Its function is as follows. Acts as a flagellar brake, regulating swimming and swarming in a bis-(3'-5') cyclic diguanylic acid (c-di-GMP)-dependent manner. Binds 1 c-di-GMP dimer per subunit. Increasing levels of c-di-GMP lead to decreased motility. This Thiobacillus denitrificans (strain ATCC 25259 / T1) protein is Flagellar brake protein YcgR.